The chain runs to 132 residues: Small ribosomal subunit protein uS11 (132 aa).

The protein belongs to the universal ribosomal protein uS11 family. As to quaternary structure, part of the 30S ribosomal subunit. Interacts with proteins S7 and S18. Binds to IF-3.

Located on the platform of the 30S subunit, it bridges several disparate RNA helices of the 16S rRNA. Forms part of the Shine-Dalgarno cleft in the 70S ribosome. The sequence is that of Small ribosomal subunit protein uS11 from Leifsonia xyli subsp. xyli (strain CTCB07).